The following is a 335-amino-acid chain: G-protein coupled receptor 157 (335 aa).

The Extracellular segment spans residues 1–15; it reads MQPSPPPTELVPSER. A helical transmembrane segment spans residues 16–36; sequence AVVLLSCALSALGSGLLVATH. The Cytoplasmic portion of the chain corresponds to 37 to 48; the sequence is ALWPDLRSRARR. Residues 49–69 traverse the membrane as a helical segment; sequence LLLFLSLADLLSAASYFYGVL. Over 70–87 the chain is Extracellular; sequence QNFAGPSWDCVLQGALST. Residues 88 to 108 form a helical membrane-spanning segment; sequence FANTSSFFWTVAIALYLYLSI. Residues 109–119 are Cytoplasmic-facing; sequence VRAARGPRTDR. The helical transmembrane segment at 120-140 threads the bilayer; that stretch reads LLWAFHVVSWGVPLVITVAAV. Residues 141–166 are Extracellular-facing; that stretch reads ALKKIGYDASDVSVGWCWIDLEAKDH. Residues 167–187 traverse the membrane as a helical segment; it reads VLWMLLTGKLWEMLAYVLLPL. Residues 188–226 are Cytoplasmic-facing; the sequence is LYLLVRKHINRAHTALSEYRPILSQEHRLLRHSSMADKK. The chain crosses the membrane as a helical span at residues 227 to 247; it reads LVLIPLIFIGLRVWSTVRFVL. Topologically, residues 248-258 are extracellular; the sequence is TLCGSPAVQTP. Residues 259 to 279 traverse the membrane as a helical segment; the sequence is VLVVLHGIGNTFQGGANCIMF. Residues 280–335 lie on the Cytoplasmic side of the membrane; the sequence is VLCTRAVRTRLFSLCCCCCSSQPPTKSPAGTPKAPAPSKPGESQESQGTPGELPST. The segment at 300 to 335 is disordered; that stretch reads SQPPTKSPAGTPKAPAPSKPGESQESQGTPGELPST. The span at 320–335 shows a compositional bias: polar residues; that stretch reads GESQESQGTPGELPST.

The protein belongs to the G-protein coupled receptor 2 family.

The protein localises to the cell projection. Its subcellular location is the cilium membrane. Functionally, orphan receptor that promotes neuronal differentiation of radial glial progenitors (RGPs). The activity of this receptor is mediated by a G(q)-protein that activates a phosphatidylinositol-calcium second messenger. The polypeptide is G-protein coupled receptor 157 (GPR157) (Homo sapiens (Human)).